Consider the following 205-residue polypeptide: Ephrin-A1 (205 aa).

The first 18 residues, 1–18 (MEFLWAPLLGLCCSLAAA), serve as a signal peptide directing secretion. The 133-residue stretch at 19–151 (DRHTVFWNSS…RLKVTVSGKI (133 aa)) folds into the Ephrin RBD domain. Residue Asn-26 is glycosylated (N-linked (GlcNAc...) asparagine). 2 disulfide bridges follow: Cys-51/Cys-92 and Cys-80/Cys-140. Ser-182 carries the GPI-anchor amidated serine lipid modification. The propeptide at 183–205 (AAPRLFPLAWTVLLLPLLLLQTP) is removed in mature form.

This sequence belongs to the ephrin family. In terms of assembly, monomer. Homodimer. Forms heterodimers with EPHA2. Binds to the receptor tyrosine kinases EPHA2, EPHA3, EPHA4, EPHA5, EPHA6 and EPHA7. Also binds with low affinity to EPHA1. In terms of processing, undergoes proteolysis by a metalloprotease to give rise to a soluble monomeric form. Post-translationally, N-Glycosylation is required for binding to EPHA2 receptor and inducing its internalization. Brain. Down-regulated in primary glioma tissues compared to the normal tissues. The soluble monomeric form is expressed in the glioblastoma multiforme (GBM) and breast cancer cells (at protein level).

The protein resides in the cell membrane. The protein localises to the secreted. Its function is as follows. Cell surface GPI-bound ligand for Eph receptors, a family of receptor tyrosine kinases which are crucial for migration, repulsion and adhesion during neuronal, vascular and epithelial development. Binds promiscuously Eph receptors residing on adjacent cells, leading to contact-dependent bidirectional signaling into neighboring cells. Plays an important role in angiogenesis and tumor neovascularization. The recruitment of VAV2, VAV3 and PI3-kinase p85 subunit by phosphorylated EPHA2 is critical for EFNA1-induced RAC1 GTPase activation and vascular endothelial cell migration and assembly. Exerts anti-oncogenic effects in tumor cells through activation and down-regulation of EPHA2. Activates EPHA2 by inducing tyrosine phosphorylation which leads to its internalization and degradation. Acts as a negative regulator in the tumorigenesis of gliomas by down-regulating EPHA2 and FAK. Can evoke collapse of embryonic neuronal growth cone and regulates dendritic spine morphogenesis. The polypeptide is Ephrin-A1 (EFNA1) (Homo sapiens (Human)).